A 101-amino-acid chain; its full sequence is Apolipoprotein C-II (101 aa).

An N-terminal signal peptide occupies residues 1–22; the sequence is MGTRFLLALFLVLLVLGLEVQA. Residues 66–74 form a lipid binding region; that stretch reads AVDERIRDM. The segment at 78–101 is lipoprotein lipase cofactor; the sequence is STAAVTTYAGIFTDQLFSMLKGEQ.

This sequence belongs to the apolipoprotein C2 family. Post-translationally, proapolipoprotein C-II is synthesized as a sialic acid containing glycoprotein which is subsequently desialylated prior to its proteolytic processing. Proapolipoprotein C-II, the major form found in plasma undergoes proteolytic cleavage of its N-terminal hexapeptide to generate apolipoprotein C-II, which occurs as the minor form in plasma.

It localises to the secreted. In terms of biological role, component of chylomicrons, very low-density lipoproteins (VLDL), low-density lipoproteins (LDL), and high-density lipoproteins (HDL) in plasma. Plays an important role in lipoprotein metabolism as an activator of lipoprotein lipase. Both proapolipoprotein C-II and apolipoprotein C-II can activate lipoprotein lipase. In Tupaia glis (Common tree shrew), this protein is Apolipoprotein C-II (APOC2).